Here is a 31-residue protein sequence, read N- to C-terminus: Cytochrome b6-f complex subunit 6 (31 aa).

The chain crosses the membrane as a helical span at residues 4-24; it reads ITSYFGFLLAALTITSVLFIG.

The protein belongs to the PetL family. As to quaternary structure, the 4 large subunits of the cytochrome b6-f complex are cytochrome b6, subunit IV (17 kDa polypeptide, PetD), cytochrome f and the Rieske protein, while the 4 small subunits are PetG, PetL, PetM and PetN. The complex functions as a dimer.

Its subcellular location is the plastid. It is found in the chloroplast thylakoid membrane. Functionally, component of the cytochrome b6-f complex, which mediates electron transfer between photosystem II (PSII) and photosystem I (PSI), cyclic electron flow around PSI, and state transitions. PetL is important for photoautotrophic growth as well as for electron transfer efficiency and stability of the cytochrome b6-f complex. This chain is Cytochrome b6-f complex subunit 6, found in Nandina domestica (Heavenly bamboo).